Here is a 197-residue protein sequence, read N- to C-terminus: Peptidyl-tRNA hydrolase (197 aa).

Y21 lines the tRNA pocket. The Proton acceptor role is filled by H26. Residues Y72, N74, and N120 each coordinate tRNA.

This sequence belongs to the PTH family. As to quaternary structure, monomer.

It is found in the cytoplasm. The enzyme catalyses an N-acyl-L-alpha-aminoacyl-tRNA + H2O = an N-acyl-L-amino acid + a tRNA + H(+). In terms of biological role, hydrolyzes ribosome-free peptidyl-tRNAs (with 1 or more amino acids incorporated), which drop off the ribosome during protein synthesis, or as a result of ribosome stalling. Its function is as follows. Catalyzes the release of premature peptidyl moieties from peptidyl-tRNA molecules trapped in stalled 50S ribosomal subunits, and thus maintains levels of free tRNAs and 50S ribosomes. This chain is Peptidyl-tRNA hydrolase, found in Saccharophagus degradans (strain 2-40 / ATCC 43961 / DSM 17024).